The sequence spans 232 residues: Enolase-phosphatase E1 (232 aa).

The protein belongs to the HAD-like hydrolase superfamily. MasA/MtnC family. In terms of assembly, monomer. It depends on Mg(2+) as a cofactor.

The catalysed reaction is 5-methylsulfanyl-2,3-dioxopentyl phosphate + H2O = 1,2-dihydroxy-5-(methylsulfanyl)pent-1-en-3-one + phosphate. It participates in amino-acid biosynthesis; L-methionine biosynthesis via salvage pathway; L-methionine from S-methyl-5-thio-alpha-D-ribose 1-phosphate: step 3/6. It functions in the pathway amino-acid biosynthesis; L-methionine biosynthesis via salvage pathway; L-methionine from S-methyl-5-thio-alpha-D-ribose 1-phosphate: step 4/6. Bifunctional enzyme that catalyzes the enolization of 2,3-diketo-5-methylthiopentyl-1-phosphate (DK-MTP-1-P) into the intermediate 2-hydroxy-3-keto-5-methylthiopentenyl-1-phosphate (HK-MTPenyl-1-P), which is then dephosphorylated to form the acireductone 1,2-dihydroxy-3-keto-5-methylthiopentene (DHK-MTPene). This is Enolase-phosphatase E1 from Xylella fastidiosa (strain 9a5c).